We begin with the raw amino-acid sequence, 267 residues long: Transcription factor HES-1-A (267 aa).

Residues 1-43 (MPADVMEKNSSSPVAATPASVSNTPDKPKTASEHRKSSKPIME) form a disordered region. The span at 10–22 (SSSPVAATPASVS) shows a compositional bias: low complexity. Over residues 26 to 35 (DKPKTASEHR) the composition is skewed to basic and acidic residues. The bHLH domain maps to 34-91 (HRKSSKPIMEKRRRARINESLGQLKTLILDALKKDSSRHSKLEKADILEMTVKHLRNL). Positions 110–143 (YRAGFSECMNEVTRFLSTCEGVNTDVRTRLLGHL) constitute an Orange domain. The WRPW motif motif lies at 264–267 (WRPW).

In terms of assembly, transcription repression requires formation of a complex with a corepressor protein of the Groucho/TLE family. Interacts with the bHLH protein hes2, and binds DNA in the form of a heterodimer with the bHLH protein hey1/hrt1. Interacts with the bHLH protein hes6; this interaction may inhibit the transcriptional repressor activity. As to expression, starting from late neurula stage, weakly expressed in midline neural cells, where expression is restricted to the superficial layer of the prospective floorplate. Expressed in the posterior somitic mesoderm (PSM) at tailbud stage. During early tailbud stages, broadly expressed within the pronephric mesoderm both around and inside the developing pronephros. During late tailbud to early tadpole stages, expressed more ventrally in the pronephros, and although initially expressed in both the lateral and medial layers, by these later stages expression is predominantly in the lateral layer. Pronephric expression is no longer detectable in late tadpoles (stage 35).

It localises to the nucleus. Transcriptional repressor of a subset of early mesodermal genes including myod1 and t/bra. Binds DNA on N-box motifs: 5'-CACNAG-3'. Acts as a negative regulator of myogenesis, mediating Notch signaling to repress expression of myod1. This is Transcription factor HES-1-A (hes1-a) from Xenopus laevis (African clawed frog).